Consider the following 256-residue polypeptide: Dihydromonacolin L-[lovastatin nonaketide synthase] thioesterase (256 aa).

Catalysis depends on charge relay system residues S122, D201, and H229.

This sequence belongs to the LovG family.

It catalyses the reaction dihydromonacolin L-[lovastatin nonaketide synthase] + H2O = holo-[lovastatin nonaketide synthase] + dihydromonacolin L carboxylate + H(+). It participates in polyketide biosynthesis; lovastatin biosynthesis. In terms of biological role, esterase; part of the gene cluster that mediates the biosynthesis of lovastatin (also known as mevinolin, mevacor or monacolin K), a hypolipidemic inhibitor of (3S)-hydroxymethylglutaryl-coenzyme A (HMG-CoA) reductase (HMGR). The first step in the biosynthesis of lovastatin is the production of dihydromonacolin L acid by the lovastatin nonaketide synthase lovB and the trans-acting enoyl reductase lovC via condensation of one acetyl-CoA unit and 8 malonyl-CoA units. Dihydromonacolin L acid is released from lovB by the thioesterase lovG. Next, dihydromonacolin L acid is oxidized by the dihydromonacolin L monooxygenase lovA twice to form monacolin J acid. The 2-methylbutyrate moiety of lovastatin is synthesized by the lovastatin diketide synthase lovF via condensation of one acetyl-CoA unit and one malonyl-CoA unit. Finally, the covalent attachment of this moiety to monacolin J acid is catalyzed by the transesterase lovD to yield lovastatin. LovD has broad substrate specificity and can also convert monacolin J to simvastatin using alpha-dimethylbutanoyl-S-methyl-3-mercaptopropionate (DMB-S-MMP) as the thioester acyl donor, and can also catalyze the reverse reaction and function as hydrolase in vitro. LovD has much higher activity with LovF-bound 2-methylbutanoate than with free diketide substrates. Functionally, esterase that catalyzes the release of covalently bound dihydromonacolin L from LovB during lovastatin biosynthesis. The chain is Dihydromonacolin L-[lovastatin nonaketide synthase] thioesterase from Aspergillus terreus.